The following is a 411-amino-acid chain: Translation initiation factor 2 subunit gamma (411 aa).

Residues 9–203 enclose the tr-type G domain; the sequence is QAEVNIGMVG…AIEDFIPTPK (195 aa). The interval 18–25 is G1; sequence GHVDHGKT. Residues aspartate 21, threonine 25, glycine 46, and threonine 48 each contribute to the Mg(2+) site. 21-26 is a GTP binding site; that stretch reads DHGKTT. Residues 46-50 are G2; that stretch reads GITIK. Zn(2+) contacts are provided by cysteine 61, cysteine 64, cysteine 73, and cysteine 76. The G3 stretch occupies residues 90–93; it reads DAPG. Residues 146–149 and 181–183 each bind GTP; these read NKIE and SAL. Residues 146 to 149 form a G4 region; it reads NKIE. Residues 181–183 are G5; it reads SAL.

It belongs to the TRAFAC class translation factor GTPase superfamily. Classic translation factor GTPase family. EIF2G subfamily. As to quaternary structure, heterotrimer composed of an alpha, a beta and a gamma chain. Mg(2+) serves as cofactor.

It catalyses the reaction GTP + H2O = GDP + phosphate + H(+). Functionally, eIF-2 functions in the early steps of protein synthesis by forming a ternary complex with GTP and initiator tRNA. The sequence is that of Translation initiation factor 2 subunit gamma from Pyrococcus horikoshii (strain ATCC 700860 / DSM 12428 / JCM 9974 / NBRC 100139 / OT-3).